The chain runs to 116 residues: Hydrogenase maturation factor HypA (116 aa).

His2 contributes to the Ni(2+) binding site. Zn(2+) contacts are provided by Cys73, Cys76, Cys90, and Cys93.

The protein belongs to the HypA/HybF family.

Functionally, involved in the maturation of [NiFe] hydrogenases. Required for nickel insertion into the metal center of the hydrogenase. The sequence is that of Hydrogenase maturation factor HypA from Escherichia coli O6:H1 (strain CFT073 / ATCC 700928 / UPEC).